Consider the following 408-residue polypeptide: Imidazolonepropionase (408 aa).

2 residues coordinate Fe(3+): H73 and H75. 2 residues coordinate Zn(2+): H73 and H75. Positions 82, 145, and 178 each coordinate 4-imidazolone-5-propanoate. Position 145 (Y145) interacts with N-formimidoyl-L-glutamate. H243 lines the Fe(3+) pocket. H243 is a Zn(2+) binding site. Q246 provides a ligand contact to 4-imidazolone-5-propanoate. Fe(3+) is bound at residue D318. Zn(2+) is bound at residue D318. N-formimidoyl-L-glutamate-binding residues include N320 and G322. A 4-imidazolone-5-propanoate-binding site is contributed by S323.

The protein belongs to the metallo-dependent hydrolases superfamily. HutI family. It depends on Zn(2+) as a cofactor. Requires Fe(3+) as cofactor.

Its subcellular location is the cytoplasm. It carries out the reaction 4-imidazolone-5-propanoate + H2O = N-formimidoyl-L-glutamate. It functions in the pathway amino-acid degradation; L-histidine degradation into L-glutamate; N-formimidoyl-L-glutamate from L-histidine: step 3/3. Functionally, catalyzes the hydrolytic cleavage of the carbon-nitrogen bond in imidazolone-5-propanoate to yield N-formimidoyl-L-glutamate. It is the third step in the universal histidine degradation pathway. This Shewanella halifaxensis (strain HAW-EB4) protein is Imidazolonepropionase.